We begin with the raw amino-acid sequence, 449 residues long: 23S rRNA (uracil(1939)-C(5))-methyltransferase RlmD (449 aa).

A TRAM domain is found at 12–70 (SKQLSAKQSFSVHQLDHLGAGIAQHQGKVVFIPGALPNETVQAQLTEQKKNYARAKLIK). C83, C89, C92, and C170 together coordinate [4Fe-4S] cluster. Residues Q282, F311, N316, E332, D359, and D379 each contribute to the S-adenosyl-L-methionine site. The active-site Nucleophile is C405.

Belongs to the class I-like SAM-binding methyltransferase superfamily. RNA M5U methyltransferase family. RlmD subfamily.

The enzyme catalyses uridine(1939) in 23S rRNA + S-adenosyl-L-methionine = 5-methyluridine(1939) in 23S rRNA + S-adenosyl-L-homocysteine + H(+). In terms of biological role, catalyzes the formation of 5-methyl-uridine at position 1939 (m5U1939) in 23S rRNA. The polypeptide is 23S rRNA (uracil(1939)-C(5))-methyltransferase RlmD (Shewanella sp. (strain ANA-3)).